We begin with the raw amino-acid sequence, 223 residues long: Twisted gastrulation protein homolog 1 (223 aa).

The first 25 residues, 1 to 25 (MKLHYVAVLTLAILMFLTWLPASLS), serve as a signal peptide directing secretion. N-linked (GlcNAc...) asparagine glycosylation is found at Asn-52 and Asn-81.

Belongs to the twisted gastrulation protein family. As to quaternary structure, interacts with CHRD and BMP4. This interaction enhances CHRD/BMP4 complex formation. Interacts with BMP7.

The protein resides in the secreted. In terms of biological role, may be involved in dorsoventral axis formation. Seems to antagonize BMP signaling by forming ternary complexes with CHRD and BMPs, thereby preventing BMPs from binding to their receptors. In addition to the anti-BMP function, also has pro-BMP activity, partly mediated by cleavage and degradation of CHRD, which releases BMPs from ternary complexes. May be an important modulator of BMP-regulated cartilage development and chondrocyte differentiation. May play a role in thymocyte development. This is Twisted gastrulation protein homolog 1 (TWSG1) from Pongo abelii (Sumatran orangutan).